Consider the following 210-residue polypeptide: BAG family molecular chaperone regulator 2 (210 aa).

The residue at position 2 (alanine 2) is an N-acetylalanine. Phosphoserine occurs at positions 20, 31, and 73. Residues 20-60 adopt a coiled-coil conformation; the sequence is SMADRSSRLLESLDQLELRVEALRDAATAVEQEKEILLEMI. The BAG domain occupies 109–189; the sequence is SLKHATRIID…NIDNSDKAIK (81 aa).

In terms of assembly, binds to the ATPase domain of HSP/HSC70 chaperones. May interact with NWD1. Interacts with HSPA1A (via NBD), HSPA1B (via NBD) and HSPA8. May interact with DNJC9; the interaction seems to be histone-dependent.

Its function is as follows. Co-chaperone for HSP70 and HSC70 chaperone proteins. Acts as a nucleotide-exchange factor (NEF) promoting the release of ADP from the HSP70 and HSC70 proteins thereby triggering client/substrate protein release. This Mus musculus (Mouse) protein is BAG family molecular chaperone regulator 2 (Bag2).